We begin with the raw amino-acid sequence, 167 residues long: Peptidyl-prolyl cis-trans isomerase-like 3 (167 aa).

The 160-residue stretch at 1-160 folds into the PPIase cyclophilin-type domain; the sequence is MSVTLHTTLG…EEVRIERVTV (160 aa).

Belongs to the cyclophilin-type PPIase family. PPIL3 subfamily.

The enzyme catalyses [protein]-peptidylproline (omega=180) = [protein]-peptidylproline (omega=0). Its function is as follows. PPIases accelerate the folding of proteins. It catalyzes the cis-trans isomerization of proline imidic peptide bonds in oligopeptides. This is Peptidyl-prolyl cis-trans isomerase-like 3 (cyp-10) from Neurospora crassa (strain ATCC 24698 / 74-OR23-1A / CBS 708.71 / DSM 1257 / FGSC 987).